An 877-amino-acid polypeptide reads, in one-letter code: MNEQYSAMRGNVSMLGKLLGDTIKDALGEEILDRVETIRRLSKSSRAGNEASRQALLNTLQNLSNDELLPVARAFSQFLNLANVAEQYHRISPHGEAASNPDALYHLFTRLKNKNLDEAQIRQAVDNLSIELVLTAHPTEIARRTLIHKLVEVNTCLSQLDHDDLADYERHQIMRRLRQLVAQSWHTDEIRKNRPTPIDEAKWGYAVVENSLWEGVPAFLREFNEQLEKSLGYQLPVEAVPVRFTAWMGGDRDGNPNVTAEVTRRALLLSRWKAAELFLRDVQVLVSELSMTVCTPELRALAGEHTQEPYREVLKRLRQQLNNTLTYLDARLRGERLPRPADLLVSNDQLWQPLHTCYRSLKACGMGIIANGQLLDTLRRVHCFGVPLVRIDIRQESTRHTEALAELTRYLGLGDYETWSEEDKQTFLLRELNSKRPLVPRHWTPSPETKEVFDTCQVIAEAPAGAIAAYVISMARTPSDVLAVHLLLKEAGCPYNLPVVPLFETLDDLNNAEAVMTQLLSIDWYRGFIQGKQMVMIGYSDSAKDAGVMAASWAQYRAQEALVRVCDNAGIALTLFHGRGGSIGRGGAPAHDALLSQPPGSLKSGLRVTEQGEMIRFKLGLPEIAVSSLTLYTSAILEANLLPPPAPKQEWRDVMDELSQTSCALYRRYIRKNPDFVPYFRSATPELELGKLPLGSRPAKRRPSGGVESLRAIPWIFAWTQNRLMLPAWLGAGTALEEAMTEGHRGTLENMYRSWPFFTTRIDMLEMVFAKSDLWLAEYYDQRLVDPALWPLGTELRQQVQRDIQAVLTIADTDHLMADLPWAAESIALRNVYTDPLNVLQAELLYRSRHQEQPDANVEQALMVTIAGVAAGMRNTG.

Residues His-137 and Lys-544 contribute to the active site.

The protein belongs to the PEPCase type 1 family. Mg(2+) serves as cofactor.

The catalysed reaction is oxaloacetate + phosphate = phosphoenolpyruvate + hydrogencarbonate. Its function is as follows. Forms oxaloacetate, a four-carbon dicarboxylic acid source for the tricarboxylic acid cycle. The protein is Phosphoenolpyruvate carboxylase of Edwardsiella ictaluri (strain 93-146).